The chain runs to 217 residues: uncharacterized protein (217 aa).

In terms of domain architecture, ABC transporter spans 2–216; sequence LCVKNVSLRL…AQWSENYNKL (215 aa). 34 to 41 provides a ligand contact to ATP; sequence GPSGCGKS.

This sequence belongs to the ABC transporter superfamily.

Probably part of a binding-protein-dependent transport system YnjCD. Probably responsible for energy coupling to the transport system. This is an uncharacterized protein from Escherichia coli (strain K12).